Here is a 159-residue protein sequence, read N- to C-terminus: Vesicle transport protein SFT2A (159 aa).

Residues 1–36 (MEKLRRVLSGQDDEEQGLTAQVLDASSLSFNTRLKW) are Cytoplasmic-facing. At Ser-9 the chain carries Phosphoserine. The chain crosses the membrane as a helical span at residues 37 to 57 (FAICFVCGVFFSILGTGLLWL). Topologically, residues 58 to 62 (PGGIK) are lumenal. The helical transmembrane segment at 63-83 (LFAVFYTLGNLAALASTCFLM) threads the bilayer. Residues 84–97 (GPVKQLKKMFEATR) lie on the Cytoplasmic side of the membrane. The chain crosses the membrane as a helical span at residues 98–118 (LLATIVMLLCFIFTLCAALWW). Residues 119 to 122 (HKKG) lie on the Lumenal side of the membrane. A helical membrane pass occupies residues 123 to 143 (LAVLFCILQFLSMTWYSLSYI). Residues 144–159 (PYARDAVIKCCSSLLS) are Cytoplasmic-facing.

This sequence belongs to the SFT2 family.

It is found in the membrane. May be involved in fusion of retrograde transport vesicles derived from an endocytic compartment with the Golgi complex. The protein is Vesicle transport protein SFT2A of Homo sapiens (Human).